The primary structure comprises 330 residues: Pseudouridine-5'-phosphate glycosidase (330 aa).

The active-site Proton donor is the glutamate 50. Substrate is bound by residues lysine 112 and valine 132. Residue aspartate 164 coordinates Mn(2+). Residue 166 to 168 (SSD) participates in substrate binding. The active-site Nucleophile is lysine 185.

Belongs to the pseudouridine-5'-phosphate glycosidase family. In terms of assembly, homotrimer. The cofactor is Mn(2+).

It is found in the peroxisome. The enzyme catalyses D-ribose 5-phosphate + uracil = psi-UMP + H2O. In terms of biological role, catalyzes the reversible cleavage of pseudouridine 5'-phosphate (PsiMP) to ribose 5-phosphate and uracil. Functions biologically in the cleavage direction, as part of a pseudouridine degradation pathway. Acts together with the pseudouridine kinase PUKI in the peroxisome to prevent toxic pseudouridine monophosphate accumulation. Can catalyze the formation of pseudouridine 5'-phosphate (reverse reaction) in vitro, with a catalytic efficiency 4 times lower than the hydrolysis reaction. This chain is Pseudouridine-5'-phosphate glycosidase, found in Arabidopsis thaliana (Mouse-ear cress).